Reading from the N-terminus, the 318-residue chain is Protein-L-histidine N-pros-methyltransferase (318 aa).

Residues 1–18 (MRLLAGWLCLSLASVWLA) form the signal peptide. A glycan (N-linked (GlcNAc...) asparagine) is linked at N35. 3 residues coordinate S-adenosyl-L-homocysteine: E174, N210, and Y295.

It belongs to the METTL9 family.

It is found in the endoplasmic reticulum. It localises to the mitochondrion. The catalysed reaction is L-histidyl-[protein] + S-adenosyl-L-methionine = N(pros)-methyl-L-histidyl-[protein] + S-adenosyl-L-homocysteine + H(+). Functionally, protein-histidine N-methyltransferase that specifically catalyzes 1-methylhistidine (pros-methylhistidine) methylation of target proteins. Specifically methylates the second His of proteins with a His-x-His (HxH) motif (where 'x' is preferably a small amino acid), while exploiting the first one as a recognition signature. Catalyzes methylation of target proteins such as S100A9, NDUFB3, SLC39A5, SLC39A7, ARMC6 and DNAJB12; 1-methylhistidine modification may affect the binding of zinc and other metals to its target proteins. Constitutes the main methyltransferase for the 1-methylhistidine modification in cell. In Homo sapiens (Human), this protein is Protein-L-histidine N-pros-methyltransferase.